Reading from the N-terminus, the 120-residue chain is Autophagy-related protein 8d (120 aa).

Residue glycine 117 is the site of Phosphatidylethanolamine amidated glycine attachment. The propeptide at 118 to 120 (IFF) is removed in mature form.

Belongs to the ATG8 family. As to quaternary structure, interacts with ATG4B. Interacts with NBR1. The C-terminal 3 residues are removed by ATG4 to expose Gly-117 at the C-terminus. This Gly-117 forms then a thioester bond with the 'Cys-558' of ATG7 (E1-like activating enzyme) before being transferred to the 'Cys-258' of ATG3 (the specific E2 conjugating enzyme), in order to be finally amidated with phosphatidylethanolamine. This lipid modification anchors ATG8 to autophagosomes. Constitutively expressed.

The protein localises to the cytoplasmic vesicle. The protein resides in the autophagosome membrane. It is found in the vacuole membrane. Its subcellular location is the cytoplasm. It localises to the cytoskeleton. Its function is as follows. Ubiquitin-like modifier involved in autophagosomes formation. May mediate the delivery of the autophagosomes to the vacuole via the microtubule cytoskeleton. The sequence is that of Autophagy-related protein 8d (ATG8D) from Arabidopsis thaliana (Mouse-ear cress).